The following is a 64-amino-acid chain: Large ribosomal subunit protein eL37 (64 aa).

4 residues coordinate Zn(2+): C20, C23, C35, and C38. The C4-type zinc-finger motif lies at 20–38; that stretch reads CRRCGRRAFHVRKKVCAAC.

Belongs to the eukaryotic ribosomal protein eL37 family. Requires Zn(2+) as cofactor.

In terms of biological role, binds to the 23S rRNA. The chain is Large ribosomal subunit protein eL37 from Methanococcus maripaludis (strain C6 / ATCC BAA-1332).